Here is a 524-residue protein sequence, read N- to C-terminus: Cytochrome P450 monooxygenase patH (524 aa).

Residues 1-4 (MEPF) lie on the Cytoplasmic side of the membrane. The chain crosses the membrane as a helical span at residues 5–22 (LLLLLVLLPAIVLVRYAF). Residues 23–524 (TYGHRTSTMP…ADVFSRFTEG (502 aa)) lie on the Lumenal side of the membrane. An N-linked (GlcNAc...) asparagine glycan is attached at N266. C442 serves as a coordination point for heme.

Belongs to the cytochrome P450 family. Requires heme as cofactor.

It localises to the endoplasmic reticulum membrane. It catalyses the reaction 3-methylphenol + reduced [NADPH--hemoprotein reductase] + O2 = 3-hydroxybenzyl alcohol + oxidized [NADPH--hemoprotein reductase] + H2O + H(+). It participates in mycotoxin biosynthesis; patulin biosynthesis. Cytochrome P450 monooxygenase; part of the gene cluster that mediates the biosynthesis of patulin, an acetate-derived tetraketide mycotoxin produced by several fungal species that shows antimicrobial properties against several bacteria. PatH catalyzes the conversion of m-cresol into m-hydroxybenzyl alcohol. The pathway begins with the synthesis of 6-methylsalicylic acid by the polyketide synthase (PKS) patK via condensation of acetate and malonate units. The 6-methylsalicylic acid decarboxylase patG then catalyzes the decarboxylation of 6-methylsalicylic acid to yield m-cresol (also known as 3-methylphenol). These first reactions occur in the cytosol. The intermediate m-cresol is then transported into the endoplasmic reticulum where the cytochrome P450 monooxygenase patH converts it to m-hydroxybenzyl alcohol, which is further converted to gentisyl alcohol by the cytochrome P450 monooxygenase patI. The oxidoreductases patJ and patO further convert gentisyl alcohol to isoepoxydon in the vacuole. PatN catalyzes then the transformation of isoepoxydon into phyllostine. The cluster protein patF is responsible for the conversion from phyllostine to neopatulin whereas the alcohol dehydrogenase patD converts neopatulin to E-ascladiol. The steps between isoepoxydon and E-ascladiol occur in the cytosol, and E-ascladiol is probably secreted to the extracellular space by one of the cluster-specific transporters patC or patM. Finally, the secreted patulin synthase patE catalyzes the conversion of E-ascladiol to patulin. This chain is Cytochrome P450 monooxygenase patH, found in Penicillium expansum (Blue mold rot fungus).